We begin with the raw amino-acid sequence, 217 residues long: Small ribosomal subunit protein uS3 (217 aa).

A KH type-2 domain is found at 38 to 106 (IRKFINKELA…QVHINIIEIK (69 aa)).

This sequence belongs to the universal ribosomal protein uS3 family. Part of the 30S ribosomal subunit. Forms a tight complex with proteins S10 and S14.

Functionally, binds the lower part of the 30S subunit head. Binds mRNA in the 70S ribosome, positioning it for translation. The sequence is that of Small ribosomal subunit protein uS3 from Streptococcus pyogenes serotype M6 (strain ATCC BAA-946 / MGAS10394).